Consider the following 91-residue polypeptide: UPF0298 protein spyM18_0447 (91 aa).

Belongs to the UPF0298 family.

It is found in the cytoplasm. The polypeptide is UPF0298 protein spyM18_0447 (Streptococcus pyogenes serotype M18 (strain MGAS8232)).